A 136-amino-acid chain; its full sequence is Small ribosomal subunit protein uS9 (136 aa).

This sequence belongs to the universal ribosomal protein uS9 family.

This Borreliella burgdorferi (strain ZS7) (Borrelia burgdorferi) protein is Small ribosomal subunit protein uS9.